We begin with the raw amino-acid sequence, 324 residues long: Glucosyl-3-phosphoglycerate synthase (324 aa).

UDP-alpha-D-glucose is bound by residues 50–54 (PALNE), Ser81, Lys114, and 134–135 (DS). Residue Asp136 coordinates Mn(2+). A (2R)-3-phosphoglycerate-binding site is contributed by 184 to 187 (GRVT). UDP-alpha-D-glucose contacts are provided by residues 229–232 (YGVE) and 256–261 (RAHRNR). His258 serves as a coordination point for Mn(2+). Position 260 (Asn260) interacts with (2R)-3-phosphoglycerate.

It belongs to the glycosyltransferase 2 family. In terms of assembly, homotrimer. The cofactor is Mg(2+). Mn(2+) serves as cofactor.

The catalysed reaction is an NDP-alpha-D-glucose + (2R)-3-phosphoglycerate = (2R)-2-O-(alpha-D-glucopyranosyl)-3-phospho-glycerate + a ribonucleoside 5'-diphosphate + H(+). It catalyses the reaction (2R)-3-phosphoglycerate + UDP-alpha-D-glucose = (2R)-2-O-(alpha-D-glucopyranosyl)-3-phospho-glycerate + UDP + H(+). It carries out the reaction ADP-alpha-D-glucose + (2R)-3-phosphoglycerate = (2R)-2-O-(alpha-D-glucopyranosyl)-3-phospho-glycerate + ADP + H(+). The enzyme catalyses GDP-D-glucose + (2R)-3-phosphoglycerate = (2R)-2-O-(alpha-D-glucopyranosyl)-3-phospho-glycerate + GDP + H(+). Involved in the biosynthesis of 6-O-methylglucose lipopolysaccarides (MGLPs). Catalyzes the transfer of the glucose moiety from a nuleotide sugar such as UDP-alpha-D-glucose to the position 2 of 3-phospho-D-glycerate (3-PGA) to form glucosyl-3-phosphoglycerate (GPG). It can use UDP-glucose, ADP-glucose and GDP-glucose as sugar donor substrates with decreasing affinity and with 3-PGA as an acceptor. D-glycerate can only be an acceptor with ADP-glucose and at a very low rate. The polypeptide is Glucosyl-3-phosphoglycerate synthase (gpgS) (Mycobacterium bovis (strain ATCC BAA-935 / AF2122/97)).